We begin with the raw amino-acid sequence, 156 residues long: uncharacterized protein (156 aa).

Positions 1–22 (MFGKVSSLLVFASFLIIQGAFA) are cleaved as a signal peptide. Residue Ser-129 is the site of GPI-anchor amidated serine attachment. A propeptide spans 130 to 156 (GSPVRFSKSSLLIVSLLSIAAFAALVL) (removed in mature form).

It localises to the cell membrane. This is an uncharacterized protein from Schizosaccharomyces pombe (strain 972 / ATCC 24843) (Fission yeast).